Reading from the N-terminus, the 205-residue chain is Myb-related protein 305 (205 aa).

2 HTH myb-type domains span residues 10-62 (DVEV…LNYL) and 63-117 (RPDV…QKHM). 2 consecutive DNA-binding regions (H-T-H motif) follow at residues 38–62 (WNSLARSAGLKRTGKSCRLRWLNYL) and 90–113 (WSKIAKTLPGRTDNEIKNYWRTRI).

As to expression, expressed only in flowers.

Its subcellular location is the nucleus. In terms of biological role, transcription factor. The protein is Myb-related protein 305 of Antirrhinum majus (Garden snapdragon).